The chain runs to 446 residues: Tol-Pal system protein TolB (446 aa).

The signal sequence occupies residues 1–24 (MKRAFLSALSVGLAALFLTGPAQA).

The protein belongs to the TolB family. The Tol-Pal system is composed of five core proteins: the inner membrane proteins TolA, TolQ and TolR, the periplasmic protein TolB and the outer membrane protein Pal. They form a network linking the inner and outer membranes and the peptidoglycan layer.

Its subcellular location is the periplasm. Part of the Tol-Pal system, which plays a role in outer membrane invagination during cell division and is important for maintaining outer membrane integrity. This is Tol-Pal system protein TolB from Dinoroseobacter shibae (strain DSM 16493 / NCIMB 14021 / DFL 12).